We begin with the raw amino-acid sequence, 133 residues long: Ribonuclease P protein component (133 aa).

The protein belongs to the RnpA family. Consists of a catalytic RNA component (M1 or rnpB) and a protein subunit.

The catalysed reaction is Endonucleolytic cleavage of RNA, removing 5'-extranucleotides from tRNA precursor.. RNaseP catalyzes the removal of the 5'-leader sequence from pre-tRNA to produce the mature 5'-terminus. It can also cleave other RNA substrates such as 4.5S RNA. The protein component plays an auxiliary but essential role in vivo by binding to the 5'-leader sequence and broadening the substrate specificity of the ribozyme. The polypeptide is Ribonuclease P protein component (Corynebacterium efficiens (strain DSM 44549 / YS-314 / AJ 12310 / JCM 11189 / NBRC 100395)).